Reading from the N-terminus, the 96-residue chain is ATP synthase subunit f, mitochondrial (96 aa).

Belongs to the ATPase F chain family.

It localises to the mitochondrion. The protein localises to the mitochondrion inner membrane. Functionally, mitochondrial membrane ATP synthase (F(1)F(0) ATP synthase or Complex V) produces ATP from ADP in the presence of a proton gradient across the membrane which is generated by electron transport complexes of the respiratory chain. F-type ATPases consist of two structural domains, F(1) - containing the extramembraneous catalytic core and F(0) - containing the membrane proton channel, linked together by a central stalk and a peripheral stalk. During catalysis, ATP synthesis in the catalytic domain of F(1) is coupled via a rotary mechanism of the central stalk subunits to proton translocation. In Schizosaccharomyces pombe (strain 972 / ATCC 24843) (Fission yeast), this protein is ATP synthase subunit f, mitochondrial (atp17).